The following is a 194-amino-acid chain: Imidazoleglycerol-phosphate dehydratase (194 aa).

It belongs to the imidazoleglycerol-phosphate dehydratase family.

The protein resides in the cytoplasm. It catalyses the reaction D-erythro-1-(imidazol-4-yl)glycerol 3-phosphate = 3-(imidazol-4-yl)-2-oxopropyl phosphate + H2O. It participates in amino-acid biosynthesis; L-histidine biosynthesis; L-histidine from 5-phospho-alpha-D-ribose 1-diphosphate: step 6/9. The protein is Imidazoleglycerol-phosphate dehydratase of Lacticaseibacillus paracasei (strain ATCC 334 / BCRC 17002 / CCUG 31169 / CIP 107868 / KCTC 3260 / NRRL B-441) (Lactobacillus paracasei).